The primary structure comprises 1482 residues: Chromosome partition protein MukB (1482 aa).

An ATP-binding site is contributed by 34–41 (GGNGAGKS). Coiled-coil stretches lie at residues 337–418 (LNLV…QYQQ), 444–472 (LDTY…QTAH), 509–601 (RHLA…TSHA), 781–805 (AARE…ATLS), 835–1116 (EAEI…AKAG), and 1210–1265 (EAIE…LQSV). Residues 666–783 (PGGAEDARLN…SVPLFGRAAR (118 aa)) are flexible hinge. Residues 1049 to 1077 (ADAGAEERARQRRDELHTRLSNNRSRRNQ) form a disordered region. Residues 1051 to 1066 (AGAEERARQRRDELHT) are compositionally biased toward basic and acidic residues.

It belongs to the SMC family. MukB subfamily. In terms of assembly, homodimerization via its hinge domain. Binds to DNA via its C-terminal region. Interacts, and probably forms a ternary complex, with MukE and MukF via its C-terminal region. The complex formation is stimulated by calcium or magnesium. Interacts with tubulin-related protein FtsZ.

The protein localises to the cytoplasm. The protein resides in the nucleoid. In terms of biological role, plays a central role in chromosome condensation, segregation and cell cycle progression. Functions as a homodimer, which is essential for chromosome partition. Involved in negative DNA supercoiling in vivo, and by this means organize and compact chromosomes. May achieve or facilitate chromosome segregation by condensation DNA from both sides of a centrally located replisome during cell division. This is Chromosome partition protein MukB from Cronobacter sakazakii (strain ATCC BAA-894) (Enterobacter sakazakii).